Reading from the N-terminus, the 184-residue chain is Dual-action ribosomal maturation protein DarP (184 aa).

Residues 1 to 21 (MYKHPDEEWLDEIPGQQENED) form a disordered region.

Belongs to the DarP family.

It is found in the cytoplasm. Member of a network of 50S ribosomal subunit biogenesis factors which assembles along the 30S-50S interface, preventing incorrect 23S rRNA structures from forming. Promotes peptidyl transferase center (PTC) maturation. The protein is Dual-action ribosomal maturation protein DarP of Edwardsiella ictaluri (strain 93-146).